Consider the following 259-residue polypeptide: UPF0246 protein PFL_1025 (259 aa).

The protein belongs to the UPF0246 family.

This is UPF0246 protein PFL_1025 from Pseudomonas fluorescens (strain ATCC BAA-477 / NRRL B-23932 / Pf-5).